The following is a 442-amino-acid chain: Syndecan-3 (442 aa).

Disordered stretches follow at residues 1–24 (MKPG…AAAG) and 57–87 (RPVD…SGYF). Over 1–387 (MKPGPPHRAG…SILERKEVLV (387 aa)) the chain is Extracellular. Gly residues predominate over residues 13–24 (HGAGAGAGAAAG). The segment covering 63–77 (GSGDDDSFPDDELDD) has biased composition (acidic residues). S80, S82, S84, and S91 each carry an O-linked (Xyl...) (glycosaminoglycan) serine glycan. S108 carries O-linked (GalNAc) serine; by GALNT13 glycosylation. T109 and T110 each carry an O-linked (GalNAc) threonine; by GALNT13 glycan. Disordered stretches follow at residues 150–173 (EEPS…STGD), 225–326 (TTPE…ETTQ), and 340–367 (AAKA…AIDS). 3 stretches are compositionally biased toward low complexity: residues 156-173 (ATTV…STGD), 225-238 (TTPE…TAAV), and 275-286 (TLPLGTTAPGPT). O-linked (GalNAc) serine; by GALNT13 glycosylation occurs at S160. Residues T161, T162, and T169 are each glycosylated (O-linked (GalNAc) threonine; by GALNT13). An O-linked (GalNAc) serine; by GALNT13 glycan is attached at S170. T171 carries an O-linked (GalNAc) threonine; by GALNT13 glycan. Polar residues predominate over residues 288-299 (VAQTPTPETFLT). 2 O-linked (Xyl...) (glycosaminoglycan) serine glycosylation sites follow: S314 and S367. Residues 388 to 408 (AVIVGGVVGALFAAFLVTLLI) form a helical membrane-spanning segment. Y409, Y419, Y431, and Y441 each carry phosphotyrosine. Residues 409–442 (YRMKKKDEGSYTLEEPKQASVTYQKPDKQEEFYA) lie on the Cytoplasmic side of the membrane. The disordered stretch occupies residues 419-442 (YTLEEPKQASVTYQKPDKQEEFYA). Over residues 433 to 442 (KPDKQEEFYA) the composition is skewed to basic and acidic residues.

It belongs to the syndecan proteoglycan family. In terms of assembly, interacts with TIAM1. Interacts with PTN (via heparan sulfate chains); this interaction mediates the neurite outgrowth-promoting signal from PTN to the cytoskeleton of growing neurites; this interaction mediates osteoblast recruitment. Interacts with MDK; this interaction induces SDC3 clustering; this interaction induces neuronal cell adhesion and neurite outgrowth. Post-translationally, O-glycosylated within the Thr/Ser-rich region which could interact with lectin domains on other molecules. As to expression, expressed in the nervous system, the adrenal gland, and the spleen.

Its subcellular location is the cell membrane. Cell surface proteoglycan that may bear heparan sulfate. May have a role in the organization of cell shape by affecting the actin cytoskeleton, possibly by transferring signals from the cell surface in a sugar-dependent mechanism. This chain is Syndecan-3 (SDC3), found in Homo sapiens (Human).